The following is a 213-amino-acid chain: Kynurenine formamidase (213 aa).

W20 provides a ligand contact to substrate. The Zn(2+) site is built by H50, H54, and D56. Residue H60 is the Proton donor/acceptor of the active site. Positions 161 and 173 each coordinate Zn(2+).

It belongs to the Cyclase 1 superfamily. KynB family. In terms of assembly, homodimer. Requires Zn(2+) as cofactor.

It carries out the reaction N-formyl-L-kynurenine + H2O = L-kynurenine + formate + H(+). It functions in the pathway amino-acid degradation; L-tryptophan degradation via kynurenine pathway; L-kynurenine from L-tryptophan: step 2/2. In terms of biological role, catalyzes the hydrolysis of N-formyl-L-kynurenine to L-kynurenine, the second step in the kynurenine pathway of tryptophan degradation. This Pseudomonas aeruginosa (strain ATCC 15692 / DSM 22644 / CIP 104116 / JCM 14847 / LMG 12228 / 1C / PRS 101 / PAO1) protein is Kynurenine formamidase.